We begin with the raw amino-acid sequence, 378 residues long: 1-acyl-sn-glycerol-3-phosphate acyltransferase delta (378 aa).

Residues 11 to 31 (FLCHLVFCYVFIASGLIINTI) form a helical membrane-spanning segment. Residues 96 to 101 (HKFEID) carry the HXXXXD motif motif. A run of 3 helical transmembrane segments spans residues 125–145 (ELAYVPIIGWMWYFTEMVFCS), 307–327 (TLVNWLFWASLVLYPFFQFLV), and 338–358 (LASFILVFFVASVGVRWMIGV).

Belongs to the 1-acyl-sn-glycerol-3-phosphate acyltransferase family. As to expression, widely expressed with highest levels in skeletal muscle, followed by heart, liver, prostate and thymus.

Its subcellular location is the endoplasmic reticulum membrane. The catalysed reaction is a 1-acyl-sn-glycero-3-phosphate + an acyl-CoA = a 1,2-diacyl-sn-glycero-3-phosphate + CoA. It carries out the reaction (4Z,7Z,10Z,13Z,16Z,19Z)-docosahexaenoyl-CoA + 1-hexadecanoyl-sn-glycero-3-phosphate = 1-hexadecanoyl-2-(4Z,7Z,10Z,13Z,16Z,19Z-docosahexaenoyl)-sn-glycero-3-phosphate + CoA. It catalyses the reaction 1-octadecanoyl-sn-glycero-3-phosphate + (9Z,12Z)-octadecadienoyl-CoA = 1-octadecanoyl-2-(9Z,12Z-octadecadienoyl)-sn-glycero-3-phosphate + CoA. The enzyme catalyses 1-octadecanoyl-sn-glycero-3-phosphate + (4Z,7Z,10Z,13Z,16Z,19Z)-docosahexaenoyl-CoA = 1-octadecanoyl-2-(4Z,7Z,10Z,13Z,16Z,19Z-docosahexaenoyl)-sn-glycero-3-phosphate + CoA. The catalysed reaction is (4Z,7Z,10Z,13Z,16Z,19Z)-docosahexaenoyl-CoA + 1-(9Z-octadecenoyl)-sn-glycero-3-phosphate = 1-(9Z-octadecenoyl)-2-(4Z,7Z,10Z,13Z,16Z,19Z-docosahexaenoyl)-sn-glycero-3-phosphate + CoA. It participates in phospholipid metabolism; CDP-diacylglycerol biosynthesis; CDP-diacylglycerol from sn-glycerol 3-phosphate: step 2/3. Converts 1-acyl-sn-glycerol-3-phosphate (lysophosphatidic acid or LPA) into 1,2-diacyl-sn-glycerol-3-phosphate (phosphatidic acid or PA) by incorporating an acyl moiety at the sn-2 position of the glycerol backbone. Exhibits high acyl-CoA specificity for polyunsaturated fatty acyl-CoA, especially docosahexaenoyl-CoA (22:6-CoA, DHA-CoA). In Homo sapiens (Human), this protein is 1-acyl-sn-glycerol-3-phosphate acyltransferase delta (AGPAT4).